We begin with the raw amino-acid sequence, 447 residues long: UPF0210 protein LAF_0976 (447 aa).

This sequence belongs to the UPF0210 family. As to quaternary structure, homodimer.

The protein is UPF0210 protein LAF_0976 of Limosilactobacillus fermentum (strain NBRC 3956 / LMG 18251) (Lactobacillus fermentum).